The following is a 116-amino-acid chain: Large ribosomal subunit protein uL18 (116 aa).

It belongs to the universal ribosomal protein uL18 family. Part of the 50S ribosomal subunit; part of the 5S rRNA/L5/L18/L25 subcomplex. Contacts the 5S and 23S rRNAs.

Its function is as follows. This is one of the proteins that bind and probably mediate the attachment of the 5S RNA into the large ribosomal subunit, where it forms part of the central protuberance. This Shewanella piezotolerans (strain WP3 / JCM 13877) protein is Large ribosomal subunit protein uL18.